Reading from the N-terminus, the 1447-residue chain is MENSLRCVWVPKLAFVLFGASLFSAHLQVTGFQIKAFTALRFLSEPSDAVTMRGGNVLLDCSAESDRGVPVIKWKKDGIHLALGMDERKQQLSNGSLLIQNILHSRHHKPDEGLYQCEASLGDSGSIISRTAKVAVAGPLRFLSQTESVTAFMGDTVLLKCEVIGEPMPTIHWQKNQQDLTPIPGDSRVVVLPSGALQISRLQPGDIGIYRCSARNPASSRTGNEAEVRILSDPGLHRQLYFLQRPSNVVAIEGKDAVLECCVSGYPPPSFTWLRGEEVIQLRSKKYSLLGGSNLLISNVTDDDSGMYTCVVTYKNENISASAELTVLVPPWFLNHPSNLYAYESMDIEFECTVSGKPVPTVNWMKNGDVVIPSDYFQIVGGSNLRILGVVKSDEGFYQCVAENEAGNAQTSAQLIVPKPAIPSSSVLPSAPRDVVPVLVSSRFVRLSWRPPAEAKGNIQTFTVFFSREGDNRERALNTTQPGSLQLTVGNLKPEAMYTFRVVAYNEWGPGESSQPIKVATQPELQVPGPVENLQAVSTSPTSILITWEPPAYANGPVQGYRLFCTEVSTGKEQNIEVDGLSYKLEGLKKFTEYSLRFLAYNRYGPGVSTDDITVVTLSDVPSAPPQNVSLEVVNSRSIKVSWLPPPSGTQNGFITGYKIRHRKTTRRGEMETLEPNNLWYLFTGLEKGSQYSFQVSAMTVNGTGPPSNWYTAETPENDLDESQVPDQPSSLHVRPQTNCIIMSWTPPLNPNIVVRGYIIGYGVGSPYAETVRVDSKQRYYSIERLESSSHYVISLKAFNNAGEGVPLYESATTRSITDPTDPVDYYPLLDDFPTSVPDLSTPMLPPVGVQAVALTHDAVRVSWADNSVPKNQKTSEVRLYTVRWRTSFSASAKYKSEDTTSLSYTATGLKPNTMYEFSVMVTKNRRSSTWSMTAHATTYEAAPTSAPKDLTVITREGKPRAVIVSWQPPLEANGKITAYILFYTLDKNIPIDDWIMETISGDRLTHQIMDLNLDTMYYFRIQARNSKGVGPLSDPILFRTLKVEHPDKMANDQGRHGDGGYWPVDTNLIDRSTLNEPPIGQMHPPHGSVTPQKNSNLLVIIVVTVGVITVLVVVIVAVICTRRSSAQQRKKRATHSAGKRKGSQKDLRPPDLWIHHEEMEMKNIEKPSGTDPAGRDSPIQSCQDLTPVSHSQSETQLGSKSTSHSGQDTEEAGSSMSTLERSLAARRAPRAKLMIPMDAQSNNPAVVSAIPVPTLESAQYPGILPSPTCGYPHPQFTLRPVPFPTLSVDRGFGAGRSQSVSEGPTTQQPPMLPPSQPEHSSSEEAPSRTIPTACVRPTHPLRSFANPLLPPPMSAIEPKVPYTPLLSQPGPTLPKTHVKTASLGLAGKARSPLLPVSVPTAPEVSEESHKPTEDSANVYEQDDLSEQMASLEGLMKQLNAITGSAF.

Positions methionine 1–alanine 25 are cleaved as a signal peptide. Ig-like C2-type domains follow at residues histidine 26–alanine 135, proline 139–arginine 229, proline 234–threonine 326, and proline 331–isoleucine 416. Topologically, residues histidine 26–asparagine 1097 are extracellular. Disulfide bonds link cysteine 61–cysteine 117, cysteine 161–cysteine 212, and cysteine 261–cysteine 310. Residue asparagine 94 is glycosylated (N-linked (GlcNAc...) asparagine). N-linked (GlcNAc...) asparagine glycosylation is found at asparagine 299 and asparagine 318. A disulfide bridge connects residues cysteine 352 and cysteine 400. Fibronectin type-III domains follow at residues alanine 431–glutamate 524, proline 530–aspartate 620, proline 625–asparagine 718, glutamine 728–threonine 821, proline 846–alanine 942, and alanine 947–valine 1044. N-linked (GlcNAc...) asparagine glycosylation is present at asparagine 478. Residues asparagine 628 and asparagine 702 are each glycosylated (N-linked (GlcNAc...) asparagine). Residues leucine 1098–threonine 1122 form a helical membrane-spanning segment. At arginine 1123–phenylalanine 1447 the chain is on the cytoplasmic side. 2 disordered regions span residues serine 1126–aspartate 1152 and isoleucine 1165–arginine 1222. The segment covering glutamine 1129–glycine 1143 has biased composition (basic residues). Position 1178 is a phosphoserine; by MAPK1 (serine 1178). Polar residues predominate over residues proline 1179–glutamate 1221. Residue threonine 1187 is modified to Phosphothreonine; by MAPK1. Residue serine 1267 is modified to Phosphoserine; by MAPK1. 2 disordered regions span residues serine 1288 to threonine 1330 and leucine 1394 to valine 1419. The segment covering arginine 1297–proline 1310 has biased composition (polar residues). The interaction with MYO10 stretch occupies residues leucine 1432–leucine 1439.

It belongs to the immunoglobulin superfamily. DCC family. As to quaternary structure, interacts with the cytoplasmic part of UNC5A, UNC5B, UNC5C and probably UNC5D. Interacts with DSCAM. Interacts with PTK2/FAK1 and MAPK1. Interacts with NTN1. Interacts with MYO10. Interacts with CBLN4; this interaction can be competed by NTN1. Interacts with SIAH1 and SIAH2. Post-translationally, ubiquitinated; mediated by SIAH1 or SIAH2 and leading to its subsequent proteasomal degradation. Found in axons of the central and peripheral nervous system and in differentiated cell types of the intestine. Not expressed in colorectal tumor cells that lost their capacity to differentiate into mucus producing cells.

The protein resides in the membrane. Its function is as follows. Receptor for netrin required for axon guidance. Mediates axon attraction of neuronal growth cones in the developing nervous system upon ligand binding. Its association with UNC5 proteins may trigger signaling for axon repulsion. It also acts as a dependence receptor required for apoptosis induction when not associated with netrin ligand. Implicated as a tumor suppressor gene. The protein is Netrin receptor DCC (DCC) of Homo sapiens (Human).